The chain runs to 288 residues: Pyridoxal kinase PdxY (288 aa).

Substrate is bound by residues S12 and 47-48 (TQ). ATP contacts are provided by residues D114, E151, K184, and 211–214 (RPLL). Substrate is bound at residue D225.

Belongs to the pyridoxine kinase family. PdxY subfamily. In terms of assembly, homodimer. The cofactor is Mg(2+).

The catalysed reaction is pyridoxal + ATP = pyridoxal 5'-phosphate + ADP + H(+). Its pathway is cofactor metabolism; pyridoxal 5'-phosphate salvage; pyridoxal 5'-phosphate from pyridoxal: step 1/1. Its function is as follows. Pyridoxal kinase involved in the salvage pathway of pyridoxal 5'-phosphate (PLP). Catalyzes the phosphorylation of pyridoxal to PLP. The chain is Pyridoxal kinase PdxY from Pseudomonas savastanoi pv. phaseolicola (strain 1448A / Race 6) (Pseudomonas syringae pv. phaseolicola (strain 1448A / Race 6)).